A 119-amino-acid chain; its full sequence is Putative membrane protein insertion efficiency factor (119 aa).

It belongs to the UPF0161 family.

The protein localises to the cell inner membrane. Its function is as follows. Could be involved in insertion of integral membrane proteins into the membrane. This Brucella anthropi (strain ATCC 49188 / DSM 6882 / CCUG 24695 / JCM 21032 / LMG 3331 / NBRC 15819 / NCTC 12168 / Alc 37) (Ochrobactrum anthropi) protein is Putative membrane protein insertion efficiency factor.